The sequence spans 155 residues: Endoribonuclease YbeY (155 aa).

Positions 120, 124, and 130 each coordinate Zn(2+).

It belongs to the endoribonuclease YbeY family. Zn(2+) is required as a cofactor.

It localises to the cytoplasm. Single strand-specific metallo-endoribonuclease involved in late-stage 70S ribosome quality control and in maturation of the 3' terminus of the 16S rRNA. The sequence is that of Endoribonuclease YbeY from Staphylococcus aureus (strain Mu3 / ATCC 700698).